Here is a 1045-residue protein sequence, read N- to C-terminus: MAPPDSTHGGSFRDHLKTNDRSSTSKGKQRYAPLHEAIPEEISSFRSPSEYADADTDSDSDHENSGSYQLRPVDRYGSHHSSAFIPVIRDDGGVETYLDSITEAEQELLSASKQYDLFDDDDSDDLDSDEEATLRYKLKDRLKRRRARLQAWPPVKYARIWWRTLLAVIVTLAVVVWGFLSFAVSHREEPKVWPMVPSDSWFPSPKGGTLKHWEESYKKAQSLVRNMTLVEKVNITTGIGWQMGLCVGNTGLRFADHVSAFPAGITTGSTWNRELMRERGVAMGREARLKGVNVLLGPSMGPLGMMPAGGRNWEGFGSDPVLQAVAAAETIRGIQSNGVMATAKHFVMNEQEHFRQPFEWGIPTALSSNVGDRALHEVFAWPFAESIRADVASVMCSYQMVNNSHACENSKLLNGILKDELGFQGFVQSDWLAQRSGINSVLGGLDMSMPGDGLHWVDGKSLWGSELTRAVLNTSVPVERLNDMVTRIVAAWYHLGQDTWERPPPEGNGGPNFSSWTNDKVGWLHTGSNDGSYAVVNHYVDAQGTGPEAHSIIARKVAAEGTVLLKNVDRTLPLSRNASSPSGGILRVGIYGDDAGPASGPNACPDRGCNQGTLATGWGSGTVEFPYLVSPIEALESAWSTEIESTAYLRNAVMPADAVDKDLCLVFVNADSGEGYISAGGIHGDRNDLFLQKGGDTLVRTVASNCGGGQGKTVIVIHAVGPVVMESWIDLPGVHAVLLSNLPGQESGNALMDVLFGEVDASGRLPYTIGKSLEDYGPGAQVLYEPNAPVPQADFLDALYIDYRHFDRYNITPRFEFGFGLSYTTFELSDLSISPLQRKSRSPPPRPADAVAPPVYDTSLPDPASALFPTGFQPIFKYIYPYLSNLDGTAPRNYSFYPKGYNETQSPSPAGGGAGGHPALYEEMVSVKLQVSNTGDRKGQEVVQLYVSFPPDVTEEGDWVEVDSDADKTGEKQRERMKIEFPERVLRNFTKIELEPSERREVQMTLSRKDLSYWSTREQNWVMPEGKFQIWVGRSSRDLPLMGEY.

The tract at residues 1 to 74 is disordered; sequence MAPPDSTHGG…SGSYQLRPVD (74 aa). Residues 1–163 are Cytoplasmic-facing; sequence MAPPDSTHGG…PVKYARIWWR (163 aa). The span at 11-20 shows a compositional bias: basic and acidic residues; it reads SFRDHLKTND. The chain crosses the membrane as a helical; Signal-anchor for type II membrane protein span at residues 164 to 184; it reads TLLAVIVTLAVVVWGFLSFAV. Residues 185–1045 are Extracellular-facing; it reads SHREEPKVWP…SRDLPLMGEY (861 aa). Residues Asn-226, Asn-234, and Asn-402 are each glycosylated (N-linked (GlcNAc...) asparagine). Residue Asp-430 is part of the active site. Asn-473, Asn-512, Asn-577, Asn-893, Asn-902, and Asn-988 each carry an N-linked (GlcNAc...) asparagine glycan.

The protein belongs to the glycosyl hydrolase 3 family.

The protein localises to the cell membrane. It catalyses the reaction Hydrolysis of terminal, non-reducing beta-D-glucosyl residues with release of beta-D-glucose.. It participates in glycan metabolism; cellulose degradation. Beta-glucosidases are one of a number of cellulolytic enzymes involved in the degradation of cellulosic biomass. Catalyzes the last step releasing glucose from the inhibitory cellobiose. In Neosartorya fischeri (strain ATCC 1020 / DSM 3700 / CBS 544.65 / FGSC A1164 / JCM 1740 / NRRL 181 / WB 181) (Aspergillus fischerianus), this protein is Probable beta-glucosidase E (bglE).